Here is a 1076-residue protein sequence, read N- to C-terminus: DNA-directed RNA polymerase subunit beta (1076 aa).

It belongs to the RNA polymerase beta chain family. As to quaternary structure, in plastids the minimal PEP RNA polymerase catalytic core is composed of four subunits: alpha, beta, beta', and beta''. When a (nuclear-encoded) sigma factor is associated with the core the holoenzyme is formed, which can initiate transcription.

The protein resides in the plastid. It catalyses the reaction RNA(n) + a ribonucleoside 5'-triphosphate = RNA(n+1) + diphosphate. DNA-dependent RNA polymerase catalyzes the transcription of DNA into RNA using the four ribonucleoside triphosphates as substrates. In Euglena longa (Euglenophycean alga), this protein is DNA-directed RNA polymerase subunit beta.